Here is a 196-residue protein sequence, read N- to C-terminus: ATP-dependent Clp protease proteolytic subunit (196 aa).

Serine 98 serves as the catalytic Nucleophile. The active site involves histidine 123.

Belongs to the peptidase S14 family. As to quaternary structure, fourteen ClpP subunits assemble into 2 heptameric rings which stack back to back to give a disk-like structure with a central cavity, resembling the structure of eukaryotic proteasomes.

The protein localises to the cytoplasm. The enzyme catalyses Hydrolysis of proteins to small peptides in the presence of ATP and magnesium. alpha-casein is the usual test substrate. In the absence of ATP, only oligopeptides shorter than five residues are hydrolyzed (such as succinyl-Leu-Tyr-|-NHMec, and Leu-Tyr-Leu-|-Tyr-Trp, in which cleavage of the -Tyr-|-Leu- and -Tyr-|-Trp bonds also occurs).. In terms of biological role, cleaves peptides in various proteins in a process that requires ATP hydrolysis. Has a chymotrypsin-like activity. Plays a major role in the degradation of misfolded proteins. This Geobacillus thermodenitrificans (strain NG80-2) protein is ATP-dependent Clp protease proteolytic subunit.